A 3241-amino-acid polypeptide reads, in one-letter code: PHD finger protein rhinoceros (3241 aa).

Residues Met1–His16 are compositionally biased toward basic residues. The segment at Met1–Ala126 is disordered. Composition is skewed to low complexity over residues Pro42–Thr55 and Arg90–Ala126. Residues Asn312 to Gly362 form a PHD-type 1 zinc finger. Residues Lys364 to Val398 form a C2HC pre-PHD-type zinc finger. The segment at Leu422 to Ser481 adopts a PHD-type 2 zinc-finger fold. 6 disordered regions span residues Met482 to Ala501, Asn508 to Gln554, Ser737 to Pro1266, Pro1279 to Val1483, Pro1500 to Arg1613, and Asn1632 to Leu1746. Over residues Lys540–Gln554 the composition is skewed to basic and acidic residues. Over residues Lys762–Glu777 the composition is skewed to polar residues. Low complexity predominate over residues Lys807–Val874. Over residues Glu931–Ala943 the composition is skewed to basic and acidic residues. Residues Gln949–Thr965 are compositionally biased toward polar residues. The span at Asp995 to Glu1007 shows a compositional bias: acidic residues. The span at Ser1019–Ala1031 shows a compositional bias: low complexity. The span at Thr1060–Arg1075 shows a compositional bias: polar residues. The span at Thr1087–Ala1104 shows a compositional bias: low complexity. Composition is skewed to polar residues over residues Ile1117 to Asn1126 and Asn1151 to Pro1163. Residues Lys1184–Gln1211 are compositionally biased toward basic and acidic residues. Polar residues predominate over residues Val1313 to Ala1327. Thr1346 is modified (phosphothreonine). Phosphoserine is present on Ser1352. Thr1364 is subject to Phosphothreonine. The span at Ser1382–Pro1426 shows a compositional bias: low complexity. The residue at position 1456 (Thr1456) is a Phosphothreonine. The segment covering Asn1463–Val1483 has biased composition (polar residues). Positions Ser1541 to Lys1558 are enriched in basic and acidic residues. The segment covering Lys1576–His1594 has biased composition (polar residues). The span at Thr1599–Pro1608 shows a compositional bias: pro residues. Positions Thr1664–Ala1675 are enriched in polar residues. Over residues Pro1688 to Thr1699 the composition is skewed to pro residues. The segment covering Arg1717–Ser1731 has biased composition (basic residues). 2 coiled-coil regions span residues His1741–Tyr1770 and Ser1893–Val1925. 11 disordered regions span residues Leu2037–Ala2061, Ala2124–Thr2148, Asn2203–Asn2227, Thr2346–Thr2454, Ala2598–Asn2629, Ser2667–Gln2691, Asn2768–Ser2811, Gly2832–Glu2911, Asn2964–Met3015, Lys3042–Met3169, and Val3184–Arg3241. Positions Lys2359–Gln2381 are enriched in polar residues. Positions Pro2392–Val2402 are enriched in pro residues. Residues Gly2430–Arg2439 show a composition bias toward gly residues. Composition is skewed to polar residues over residues Ala2598–Gly2611 and Asp2673–Arg2689. The segment covering Asn2855–Ala2865 has biased composition (polar residues). The span at Lys2876–Ala2887 shows a compositional bias: basic and acidic residues. A phosphoserine mark is found at Ser2880 and Ser2881. A compositionally biased stretch (polar residues) spans Ala2899–Glu2911. The span at Asn2964–Glu2974 shows a compositional bias: basic and acidic residues. Basic residues predominate over residues Lys2984–Lys3002. Positions Gln3003 to Met3015 are enriched in low complexity. Phosphoserine occurs at positions 3104 and 3110. Polar residues-rich tracts occupy residues Leu3115–Pro3130 and Val3184–Pro3197. Residues Ser3198–Asn3218 show a composition bias toward low complexity. Gly residues predominate over residues Gly3219–Gly3230.

The protein belongs to the JADE family.

The protein localises to the nucleus. In terms of biological role, may function as a negative regulator of the EGFR/Ras/MAPK signaling pathway during eye development. This Drosophila melanogaster (Fruit fly) protein is PHD finger protein rhinoceros (rno).